The primary structure comprises 208 residues: Single-stranded DNA-binding protein DdrA (208 aa).

It belongs to the RAD52 family. As to quaternary structure, homooligomer composed of 8 to 10 subunits; probably arranged in a ring-structure.

Its function is as follows. ssDNA-binding protein that contributes to the ionizing radiation resistance of D.radiodurans. Plays a role in DNA repair and genome reconstitution, in a RecA-independent process, since DdrA is essential for recovery from severe genomic fragmentation as a result of exposure to severe levels of ionizing radiation in an environment lacking nutrients. In vitro, binds to the 3'-ends of single-stranded DNA, protecting them from nuclease degradation. Thus, DdrA is part of a DNA end-protection system that helps to preserve genome integrity following irradiation or desiccation. Does not display DNA strand annealing activity, unlike eukaryotic Rad52 protein homologs. This Deinococcus radiodurans (strain ATCC 13939 / DSM 20539 / JCM 16871 / CCUG 27074 / LMG 4051 / NBRC 15346 / NCIMB 9279 / VKM B-1422 / R1) protein is Single-stranded DNA-binding protein DdrA (ddrA).